A 342-amino-acid polypeptide reads, in one-letter code: Sorting nexin-15 (342 aa).

In terms of domain architecture, PX spans 1–130 (MSRQAKDDFL…EFFRGGEVTR (130 aa)). Residues R51, S53, R87, and R96 each coordinate a 1,2-diacyl-sn-glycero-3-phospho-(1D-myo-inositol-3-phosphate). Residue R105 is modified to Omega-N-methylarginine. S201 and S227 each carry phosphoserine. Residues 245–267 (DQEPWEPGGQEEEEDGEGGPTPA) are disordered. The MIT domain occupies 265–342 (TPAYLSQATE…LRLHLSQLPP (78 aa)).

It belongs to the sorting nexin family. As to quaternary structure, homodimer. Interacts with SNX1, SNX2 and SNX4. As to expression, widely expressed.

The protein localises to the cytoplasm. It is found in the membrane. The protein resides in the cytoplasmic vesicle membrane. Functionally, may be involved in several stages of intracellular trafficking. Overexpression of SNX15 disrupts the normal trafficking of proteins from the plasma membrane to recycling endosomes or the TGN. The protein is Sorting nexin-15 (SNX15) of Homo sapiens (Human).